The primary structure comprises 196 residues: Carnitine operon protein CaiE (196 aa).

The segment at 173-196 is disordered; sequence TQPLRQMEENRPRLQGTTDVTPKR. Residues 187-196 show a composition bias toward polar residues; sequence QGTTDVTPKR.

The protein belongs to the transferase hexapeptide repeat family.

The protein operates within amine and polyamine metabolism; carnitine metabolism. Overproduction of CaiE stimulates the activity of CaiB and CaiD. The sequence is that of Carnitine operon protein CaiE from Shigella flexneri serotype 5b (strain 8401).